We begin with the raw amino-acid sequence, 196 residues long: Acyl-homoserine-lactone synthase (196 aa).

This sequence belongs to the autoinducer synthase family.

The catalysed reaction is a fatty acyl-[ACP] + S-adenosyl-L-methionine = an N-acyl-L-homoserine lactone + S-methyl-5'-thioadenosine + holo-[ACP] + H(+). Functionally, required for the synthesis of a yet unknown N-aceyl-homoserine lactone (N-aceyl-HSL), an autoinducer molecule which binds to PhzR and thus regulates phenazine production. The chain is Acyl-homoserine-lactone synthase (phzI) from Pseudomonas fluorescens.